The sequence spans 585 residues: A-type ATP synthase subunit A (585 aa).

Residue 231 to 238 (GPFGSGKT) coordinates ATP.

It belongs to the ATPase alpha/beta chains family. Has multiple subunits with at least A(3), B(3), C, D, E, F, H, I and proteolipid K(x).

The protein resides in the cell membrane. It carries out the reaction ATP + H2O + 4 H(+)(in) = ADP + phosphate + 5 H(+)(out). Produces ATP from ADP in the presence of a proton gradient across the membrane. The archaeal alpha chain is a catalytic subunit. In terms of biological role, component of the A-type ATP synthase that produces ATP from ADP in the presence of a proton gradient across the membrane. The A chain is the catalytic subunit. This is A-type ATP synthase subunit A from Thermococcus kodakarensis (strain ATCC BAA-918 / JCM 12380 / KOD1) (Pyrococcus kodakaraensis (strain KOD1)).